Consider the following 152-residue polypeptide: Nucleoside diphosphate kinase (152 aa).

ATP contacts are provided by Lys12, Phe60, Arg88, Thr94, Arg105, and Asn115. His118 functions as the Pros-phosphohistidine intermediate in the catalytic mechanism.

Belongs to the NDK family. Homotrimer. Requires Mg(2+) as cofactor.

It carries out the reaction a 2'-deoxyribonucleoside 5'-diphosphate + ATP = a 2'-deoxyribonucleoside 5'-triphosphate + ADP. It catalyses the reaction a ribonucleoside 5'-diphosphate + ATP = a ribonucleoside 5'-triphosphate + ADP. Its function is as follows. Major role in the synthesis of nucleoside triphosphates other than ATP. The ATP gamma phosphate is transferred to the NDP beta phosphate via a ping-pong mechanism, using a phosphorylated active-site intermediate. This Neurospora crassa (strain ATCC 24698 / 74-OR23-1A / CBS 708.71 / DSM 1257 / FGSC 987) protein is Nucleoside diphosphate kinase (ndk-1).